The primary structure comprises 367 residues: GTPase Obg (367 aa).

The Obg domain occupies 1-158 (MFIDNVELTV…VQIRLELKLI (158 aa)). The OBG-type G domain maps to 159-358 (ADVGLVGFPN…LKYALYDLVK (200 aa)). GTP-binding positions include 165–172 (GFPNVGKS), 190–194 (FTTLT), 212–215 (DIPG), 280–283 (TKID), and 339–341 (SAV). Residues Ser-172 and Thr-192 each contribute to the Mg(2+) site.

It belongs to the TRAFAC class OBG-HflX-like GTPase superfamily. OBG GTPase family. Monomer. Mg(2+) is required as a cofactor.

The protein resides in the cytoplasm. Its function is as follows. An essential GTPase which binds GTP, GDP and possibly (p)ppGpp with moderate affinity, with high nucleotide exchange rates and a fairly low GTP hydrolysis rate. Plays a role in control of the cell cycle, stress response, ribosome biogenesis and in those bacteria that undergo differentiation, in morphogenesis control. In Nitratiruptor sp. (strain SB155-2), this protein is GTPase Obg.